Reading from the N-terminus, the 629-residue chain is Protein fem-1 homolog B (629 aa).

ANK repeat units follow at residues 47-77 (QRST…DVQQ), 89-118 (DGAT…NVNH), 122-151 (TNST…NISI), 155-184 (YDNT…DPNA), 188-217 (CGAT…AMVV), and 220-250 (HGMT…DAKS). Residues 346-379 (SHPIIYRGAVYADNMQFEQCIKLWLHALQLRQKG) form a TPR repeat. ANK repeat units lie at residues 485–529 (EGGS…NVNA) and 533–570 (MGNS…HTDM).

It belongs to the fem-1 family. In terms of assembly, component of a CRL2 E3 ubiquitin-protein ligase complex, also named ECS (Elongin BC-CUL2/5-SOCS-box protein) complex.

The protein localises to the cytoplasm. It is found in the nucleus. It functions in the pathway protein modification; protein ubiquitination. Substrate-recognition component of a Cul2-RING (CRL2) E3 ubiquitin-protein ligase complex of the DesCEND (destruction via C-end degrons) pathway, which recognizes a C-degron located at the extreme C terminus of target proteins, leading to their ubiquitination and degradation. The C-degron recognized by the DesCEND pathway is usually a motif of less than ten residues and can be present in full-length proteins, truncated proteins or proteolytically cleaved forms. The CRL2(FEM1B) complex specifically recognizes proteins ending with -Gly-Leu-Asp-Arg, leading to their ubiquitination and degradation. This Xenopus laevis (African clawed frog) protein is Protein fem-1 homolog B.